A 222-amino-acid polypeptide reads, in one-letter code: ATP-dependent Clp protease proteolytic subunit 1 (222 aa).

The Nucleophile role is filled by S121. Residue H146 is part of the active site.

Belongs to the peptidase S14 family. Fourteen ClpP subunits assemble into 2 heptameric rings which stack back to back to give a disk-like structure with a central cavity, resembling the structure of eukaryotic proteasomes.

It is found in the cytoplasm. The catalysed reaction is Hydrolysis of proteins to small peptides in the presence of ATP and magnesium. alpha-casein is the usual test substrate. In the absence of ATP, only oligopeptides shorter than five residues are hydrolyzed (such as succinyl-Leu-Tyr-|-NHMec, and Leu-Tyr-Leu-|-Tyr-Trp, in which cleavage of the -Tyr-|-Leu- and -Tyr-|-Trp bonds also occurs).. Functionally, cleaves peptides in various proteins in a process that requires ATP hydrolysis. Has a chymotrypsin-like activity. Plays a major role in the degradation of misfolded proteins. The polypeptide is ATP-dependent Clp protease proteolytic subunit 1 (Thermobifida fusca (strain YX)).